Here is a 188-residue protein sequence, read N- to C-terminus: dTTP/UTP pyrophosphatase (188 aa).

Catalysis depends on D67, which acts as the Proton acceptor.

The protein belongs to the Maf family. YhdE subfamily. It depends on a divalent metal cation as a cofactor.

The protein localises to the cytoplasm. The catalysed reaction is dTTP + H2O = dTMP + diphosphate + H(+). The enzyme catalyses UTP + H2O = UMP + diphosphate + H(+). Nucleoside triphosphate pyrophosphatase that hydrolyzes dTTP and UTP. May have a dual role in cell division arrest and in preventing the incorporation of modified nucleotides into cellular nucleic acids. The protein is dTTP/UTP pyrophosphatase of Thermococcus kodakarensis (strain ATCC BAA-918 / JCM 12380 / KOD1) (Pyrococcus kodakaraensis (strain KOD1)).